We begin with the raw amino-acid sequence, 347 residues long: 4-hydroxy-2-oxovalerate aldolase 1 (347 aa).

One can recognise a Pyruvate carboxyltransferase domain in the interval 11–263; the sequence is VVLHDMCLRD…ETGVDLFKLM (253 aa). 19–20 is a binding site for substrate; the sequence is RD. Position 20 (Asp20) interacts with Mn(2+). Residue His23 is the Proton acceptor of the active site. Positions 173 and 202 each coordinate substrate. Mn(2+) is bound by residues His202 and His204. Residue Tyr293 participates in substrate binding.

It belongs to the 4-hydroxy-2-oxovalerate aldolase family.

The catalysed reaction is (S)-4-hydroxy-2-oxopentanoate = acetaldehyde + pyruvate. The protein is 4-hydroxy-2-oxovalerate aldolase 1 (lapG) of Azoarcus sp. (strain BH72).